Reading from the N-terminus, the 602-residue chain is NAD-reducing hydrogenase HoxS subunit alpha (602 aa).

An NAD(+)-binding site is contributed by 219 to 228 (GRGGAGFSTG). 332–379 (GAGAYICGDESALIESCEGKRGTPRVKPPFPVQQGYLGKPTSVNNVET) provides a ligand contact to FMN. Positions 499, 502, 505, and 545 each coordinate [4Fe-4S] cluster.

Belongs to the complex I 51 kDa subunit family. In terms of assembly, tetramer of an alpha and a gamma subunits (flavin-containing dimer), and a delta and a nickel-containing beta subunit (hydrogenase dimer). FMN is required as a cofactor. It depends on [4Fe-4S] cluster as a cofactor.

The protein localises to the cytoplasm. It catalyses the reaction H2 + NAD(+) = NADH + H(+). Its function is as follows. Subunits alpha and gamma of HoxS constitute an NADH--oxidoreductase. The sequence is that of NAD-reducing hydrogenase HoxS subunit alpha (hoxF) from Cupriavidus necator (strain ATCC 17699 / DSM 428 / KCTC 22496 / NCIMB 10442 / H16 / Stanier 337) (Ralstonia eutropha).